The following is a 304-amino-acid chain: Ornithine carbamoyltransferase (304 aa).

Carbamoyl phosphate-binding positions include 47 to 50 (STRT), Arg-98, and 125 to 128 (HPCQ). Residues Asn-156, Asp-221, and 225–226 (SM) each bind L-ornithine. Carbamoyl phosphate contacts are provided by residues 262–263 (CL) and Arg-290.

The protein belongs to the aspartate/ornithine carbamoyltransferase superfamily. OTCase family.

It localises to the cytoplasm. The catalysed reaction is carbamoyl phosphate + L-ornithine = L-citrulline + phosphate + H(+). It functions in the pathway amino-acid biosynthesis; L-arginine biosynthesis; L-arginine from L-ornithine and carbamoyl phosphate: step 1/3. Reversibly catalyzes the transfer of the carbamoyl group from carbamoyl phosphate (CP) to the N(epsilon) atom of ornithine (ORN) to produce L-citrulline. This Methanococcus maripaludis (strain C7 / ATCC BAA-1331) protein is Ornithine carbamoyltransferase.